Here is a 464-residue protein sequence, read N- to C-terminus: Nuclear distribution protein nudF 2 (464 aa).

Positions 9–41 (QAAELNKSIIAYLSAHGLAETLAAFRKESDFPD) constitute a LisH domain. Positions 63–88 (NSTLMKKLLALESHNKALRNELNSTR) form a coiled coil. 8 WD repeats span residues 112-151 (SHRD…LERT), 154-195 (GHTM…KNVK), 199-238 (GHDH…RVKT), 241-280 (DHTG…PICK), 285-343 (GHEN…MTLT), 344-383 (GHAS…RCVK), 388-424 (AHDG…AELP), and 426-464 (SKLD…RSHK).

It belongs to the WD repeat LIS1/nudF family. In terms of assembly, self-associates. Interacts with nudE and dynein.

The protein localises to the cytoplasm. It is found in the cytoskeleton. The protein resides in the spindle pole. Its function is as follows. Positively regulates the activity of the minus-end directed microtubule motor protein dynein. May enhance dynein-mediated microtubule sliding by targeting dynein to the microtubule plus end. Required for nuclear migration during vegetative growth as well as development. Required for retrograde early endosome (EE) transport from the hyphal tip. Required for localization of dynein to the mitotic spindle poles. Recruits additional proteins to the dynein complex at SPBs. The chain is Nuclear distribution protein nudF 2 from Penicillium rubens (strain ATCC 28089 / DSM 1075 / NRRL 1951 / Wisconsin 54-1255) (Penicillium chrysogenum).